Consider the following 141-residue polypeptide: Nucleoside diphosphate kinase (141 aa).

6 residues coordinate ATP: Lys-11, Phe-59, Arg-87, Thr-93, Arg-104, and Asn-114. His-117 (pros-phosphohistidine intermediate) is an active-site residue.

The protein belongs to the NDK family. Homotetramer. Mg(2+) is required as a cofactor.

It is found in the cytoplasm. The catalysed reaction is a 2'-deoxyribonucleoside 5'-diphosphate + ATP = a 2'-deoxyribonucleoside 5'-triphosphate + ADP. The enzyme catalyses a ribonucleoside 5'-diphosphate + ATP = a ribonucleoside 5'-triphosphate + ADP. Major role in the synthesis of nucleoside triphosphates other than ATP. The ATP gamma phosphate is transferred to the NDP beta phosphate via a ping-pong mechanism, using a phosphorylated active-site intermediate. This chain is Nucleoside diphosphate kinase, found in Polynucleobacter asymbioticus (strain DSM 18221 / CIP 109841 / QLW-P1DMWA-1) (Polynucleobacter necessarius subsp. asymbioticus).